A 325-amino-acid chain; its full sequence is MNKLIFIIICLGIVDKTISSDFKSYNDGIYSFTYDNICSFKNSIRDQDVYELYYVQAPLLYATYGNLLEKINAYHSGIVLYNKNNGPNITIDYYAIPSFEATLFPKSIIKDSQGNYNITWDTHGLIEVTNYINETYWNKRQLIMYDLSGIQIKQYLSWAPIYNKTHTFYNLFNIESDLSISNSSKIYKNSSTCDDFVWASFDVLYKLGGTIASVQSDPQRDDIKLFISSGEPKIVDYNDSIKRNQIASFFNELKDFANLGKNKTALEIFNELITFFNGYFYCYIDGEYYEMKLSKQNPISFTYLPSPIPIGKRNFNEIKKLGFCK.

Residues 1-19 (MNKLIFIIICLGIVDKTIS) form the signal peptide. N-linked (GlcNAc...) asparagine glycans are attached at residues asparagine 88, asparagine 117, asparagine 133, asparagine 163, asparagine 182, asparagine 189, asparagine 238, and asparagine 262.

The protein belongs to the CLN5 family.

The chain is Cln5-like protein 2 (cln5lb) from Dictyostelium discoideum (Social amoeba).